The following is a 161-amino-acid chain: ATP synthase subunit b (161 aa).

The helical transmembrane segment at 12–32 (IAFFLFVFFCMKYIWPNLISL) threads the bilayer.

Belongs to the ATPase B chain family. F-type ATPases have 2 components, F(1) - the catalytic core - and F(0) - the membrane proton channel. F(1) has five subunits: alpha(3), beta(3), gamma(1), delta(1), epsilon(1). F(0) has three main subunits: a(1), b(2) and c(10-14). The alpha and beta chains form an alternating ring which encloses part of the gamma chain. F(1) is attached to F(0) by a central stalk formed by the gamma and epsilon chains, while a peripheral stalk is formed by the delta and b chains.

Its subcellular location is the cell membrane. F(1)F(0) ATP synthase produces ATP from ADP in the presence of a proton or sodium gradient. F-type ATPases consist of two structural domains, F(1) containing the extramembraneous catalytic core and F(0) containing the membrane proton channel, linked together by a central stalk and a peripheral stalk. During catalysis, ATP synthesis in the catalytic domain of F(1) is coupled via a rotary mechanism of the central stalk subunits to proton translocation. Functionally, component of the F(0) channel, it forms part of the peripheral stalk, linking F(1) to F(0). This is ATP synthase subunit b from Wigglesworthia glossinidia brevipalpis.